The chain runs to 543 residues: 2,3-bisphosphoglycerate-independent phosphoglycerate mutase (543 aa).

Mn(2+)-binding residues include Asp-20 and Ser-73. The active-site Phosphoserine intermediate is Ser-73. Residues His-134, 166–167, Arg-198, Arg-204, 278–281, and Lys-360 each bind substrate; these read RD and RGDR. Positions 428, 432, 469, 470, and 488 each coordinate Mn(2+).

It belongs to the BPG-independent phosphoglycerate mutase family. In terms of assembly, monomer. Mn(2+) is required as a cofactor.

The enzyme catalyses (2R)-2-phosphoglycerate = (2R)-3-phosphoglycerate. It functions in the pathway carbohydrate degradation; glycolysis; pyruvate from D-glyceraldehyde 3-phosphate: step 3/5. Catalyzes the interconversion of 2-phosphoglycerate and 3-phosphoglycerate. This chain is 2,3-bisphosphoglycerate-independent phosphoglycerate mutase, found in Rhodopirellula baltica (strain DSM 10527 / NCIMB 13988 / SH1).